Reading from the N-terminus, the 381-residue chain is NF-kappa-B inhibitor-like protein 1 (381 aa).

The tract at residues 1–34 is disordered; that stretch reads MSNPSPQVPEEEASTSVCRPKSSMASTSRRQRRE. ANK repeat units follow at residues 64–93 and 97–133; these read GQPPPLHRACARHDAPALCLLLRLGADPAH and HGDTALHAAARQGPDAYTDFFLPLLSRCPSAMGIKNK. Disordered stretches follow at residues 131 to 167, 186 to 242, and 256 to 294; these read KNKDGETPGQILGWGPPWDSAEEEEEDDASKEREWRQ, GDAS…QEEE, and ELRESRARRAQEALGDREPKPARAGPRAEHPRGAGRGSL. Serine 150 bears the Phosphoserine mark. A compositionally biased stretch (acidic residues) spans 150 to 159; that stretch reads SAEEEEEDDA. The span at 256–287 shows a compositional bias: basic and acidic residues; the sequence is ELRESRARRAQEALGDREPKPARAGPRAEHPR.

Interacts with CACTIN (via N-terminal domain); the interaction occurs in a pro-inflammatory-independent manner.

The protein resides in the nucleus. Its function is as follows. Involved in the regulation of innate immune response. Acts as negative regulator of Toll-like receptor and interferon-regulatory factor (IRF) signaling pathways. Contributes to the negative regulation of transcriptional activation of NF-kappa-B target genes in response to endogenous pro-inflammatory stimuli. In Macaca mulatta (Rhesus macaque), this protein is NF-kappa-B inhibitor-like protein 1 (NFKBIL1).